The following is a 519-amino-acid chain: Developmental regulatory protein wetA (519 aa).

Disordered regions lie at residues 105–165 (PSRP…MRSS), 270–294 (PSSA…WQSD), 301–320 (LSFT…PMPS), 325–344 (QQAS…NVGN), 389–452 (SQIH…GSNK), and 470–495 (LTGV…RRRK). A compositionally biased stretch (low complexity) spans 108–118 (PTATHALSTSP). Residues 155-165 (QSFSPSLMRSS) show a composition bias toward polar residues. Residues 301 to 315 (LSFTPDLQGQDSQWW) show a composition bias toward polar residues. Positions 389–400 (SQIHNVSRSPSL) are enriched in polar residues. A compositionally biased stretch (basic residues) spans 419 to 428 (PTHRRTHSRK). A compositionally biased stretch (low complexity) spans 435 to 452 (NAPKPAKASGSSSRGSNK).

This sequence belongs to the wetA family.

BrlA, abaA and wetA are pivotal regulators of conidiophore development and conidium maturation. They act individually and together to regulate their own expression and that of numerous other sporulation-specific genes. The chain is Developmental regulatory protein wetA from Penicillium camembertii.